We begin with the raw amino-acid sequence, 241 residues long: Probable transcriptional regulatory protein azo0574 (241 aa).

Residues 1–21 form a disordered region; sequence MAGHSKWANIQHRKGRQDAKR.

It belongs to the TACO1 family.

It is found in the cytoplasm. The protein is Probable transcriptional regulatory protein azo0574 of Azoarcus sp. (strain BH72).